A 162-amino-acid polypeptide reads, in one-letter code: Proepiregulin (162 aa).

A signal peptide spans 1–22 (METLPASWVLTLLCLGSHLLQA). A propeptide spanning residues 23–55 (VISTTVIPSCIPGESEDNCTALVQMEDDPRVAQ) is cleaved from the precursor. N-linked (GlcNAc...) asparagine glycosylation occurs at N40. Over 53–112 (VAQVQITKCSSDMDGYCLHGQCIYLVDMREKFCRCEVGYTGLRCEHFFLTVHQPLSKEYV) the chain is Extracellular. An EGF-like domain is found at 57–97 (QITKCSSDMDGYCLHGQCIYLVDMREKFCRCEVGYTGLRCE). 3 cysteine pairs are disulfide-bonded: C61/C74, C69/C85, and C87/C96. Residues 102 to 162 (TVHQPLSKEY…TSGDPVLPQV (61 aa)) constitute a propeptide, removed in mature form. Residues 113–133 (ALTVILIFLFLIITAGCIYYF) traverse the membrane as a helical segment. At 134–162 (CRWYKNRKSKKSREEYERVTSGDPVLPQV) the chain is on the cytoplasmic side.

Interacts with EGFR and ERBB4.

It is found in the secreted. Its subcellular location is the extracellular space. It localises to the cell membrane. Ligand of the EGF receptor/EGFR and ERBB4. Stimulates EGFR and ERBB4 tyrosine phosphorylation. Contributes to inflammation, wound healing, tissue repair, and oocyte maturation by regulating angiogenesis and vascular remodeling and by stimulating cell proliferation. This chain is Proepiregulin (Ereg), found in Mus musculus (Mouse).